An 89-amino-acid chain; its full sequence is Small ribosomal subunit protein uS15 (89 aa).

It belongs to the universal ribosomal protein uS15 family. In terms of assembly, part of the 30S ribosomal subunit. Forms a bridge to the 50S subunit in the 70S ribosome, contacting the 23S rRNA.

In terms of biological role, one of the primary rRNA binding proteins, it binds directly to 16S rRNA where it helps nucleate assembly of the platform of the 30S subunit by binding and bridging several RNA helices of the 16S rRNA. Its function is as follows. Forms an intersubunit bridge (bridge B4) with the 23S rRNA of the 50S subunit in the ribosome. This chain is Small ribosomal subunit protein uS15, found in Prochlorococcus marinus (strain MIT 9312).